A 408-amino-acid chain; its full sequence is NADH-quinone oxidoreductase subunit D (408 aa).

The protein belongs to the complex I 49 kDa subunit family. As to quaternary structure, NDH-1 is composed of 14 different subunits. Subunits NuoB, C, D, E, F, and G constitute the peripheral sector of the complex.

It is found in the cell inner membrane. The catalysed reaction is a quinone + NADH + 5 H(+)(in) = a quinol + NAD(+) + 4 H(+)(out). In terms of biological role, NDH-1 shuttles electrons from NADH, via FMN and iron-sulfur (Fe-S) centers, to quinones in the respiratory chain. The immediate electron acceptor for the enzyme in this species is believed to be ubiquinone. Couples the redox reaction to proton translocation (for every two electrons transferred, four hydrogen ions are translocated across the cytoplasmic membrane), and thus conserves the redox energy in a proton gradient. In Campylobacter hominis (strain ATCC BAA-381 / DSM 21671 / CCUG 45161 / LMG 19568 / NCTC 13146 / CH001A), this protein is NADH-quinone oxidoreductase subunit D.